We begin with the raw amino-acid sequence, 66 residues long: Beta-defensin 107A (66 aa).

The first 22 residues, M1 to T22, serve as a signal peptide directing secretion. Intrachain disulfides connect C37–C51 and C41–C60.

This sequence belongs to the beta-defensin family.

It localises to the secreted. Has antibacterial activity. This chain is Beta-defensin 107A (DEFB107A), found in Gorilla gorilla gorilla (Western lowland gorilla).